Here is a 748-residue protein sequence, read N- to C-terminus: Formate acetyltransferase (748 aa).

The 614-residue stretch at 5–618 folds into the PFL domain; that stretch reads NNHTNAWQGF…KTGNTPDGRK (614 aa). Cys-412 (S-acetylcysteine intermediate) is an active-site residue. Catalysis depends on Cys-413, which acts as the Cysteine radical intermediate. In terms of domain architecture, Glycine radical spans 625–748; that stretch reads PGANPMHGRD…VISRTFHESM (124 aa). A Glycine radical modification is found at Gly-723.

The protein belongs to the glycyl radical enzyme (GRE) family. PFL subfamily. In terms of assembly, homodimer.

It localises to the cytoplasm. The enzyme catalyses formate + acetyl-CoA = pyruvate + CoA. It functions in the pathway fermentation; pyruvate fermentation; formate from pyruvate: step 1/1. Catalyzes the conversion of pyruvate to formate and acetyl-CoA. In Staphylococcus epidermidis (strain ATCC 35984 / DSM 28319 / BCRC 17069 / CCUG 31568 / BM 3577 / RP62A), this protein is Formate acetyltransferase (pflB).